The primary structure comprises 156 residues: 6,7-dimethyl-8-ribityllumazine synthase (156 aa).

5-amino-6-(D-ribitylamino)uracil is bound by residues phenylalanine 22, alanine 57–glutamate 59, and serine 81–isoleucine 83. Glycine 86 to threonine 87 lines the (2S)-2-hydroxy-3-oxobutyl phosphate pocket. The active-site Proton donor is the histidine 89. 5-amino-6-(D-ribitylamino)uracil is bound at residue phenylalanine 114. Arginine 128 serves as a coordination point for (2S)-2-hydroxy-3-oxobutyl phosphate.

The protein belongs to the DMRL synthase family. In terms of assembly, forms an icosahedral capsid composed of 60 subunits, arranged as a dodecamer of pentamers.

The enzyme catalyses (2S)-2-hydroxy-3-oxobutyl phosphate + 5-amino-6-(D-ribitylamino)uracil = 6,7-dimethyl-8-(1-D-ribityl)lumazine + phosphate + 2 H2O + H(+). It participates in cofactor biosynthesis; riboflavin biosynthesis; riboflavin from 2-hydroxy-3-oxobutyl phosphate and 5-amino-6-(D-ribitylamino)uracil: step 1/2. Its function is as follows. Catalyzes the formation of 6,7-dimethyl-8-ribityllumazine by condensation of 5-amino-6-(D-ribitylamino)uracil with 3,4-dihydroxy-2-butanone 4-phosphate. This is the penultimate step in the biosynthesis of riboflavin. The chain is 6,7-dimethyl-8-ribityllumazine synthase from Vibrio vulnificus (strain CMCP6).